We begin with the raw amino-acid sequence, 294 residues long: Transmembrane protein 178B (294 aa).

A signal peptide spans 1–23 (MAAGKLLLYAGLSLSLCALGMLA). Transmembrane regions (helical) follow at residues 172–192 (AGFM…GMLG), 206–226 (LLFL…VAGI), and 252–272 (MFCA…CTLA).

The protein belongs to the TMEM178 family.

It is found in the membrane. The polypeptide is Transmembrane protein 178B (tmem178b) (Danio rerio (Zebrafish)).